The primary structure comprises 325 residues: Mitochondrial amidoxime-reducing component 1 (325 aa).

The Mitochondrial matrix segment spans residues 1 to 16 (MDLKEAFATIFDQNRK). A helical; Signal-anchor for type II membrane protein transmembrane segment spans residues 17–36 (VALYAAGTTVAVLGLGLVFK). At 37–325 (YMRREEKLTR…VGEPVYKITY (289 aa)) the chain is on the cytoplasmic side. 3 residues coordinate Mo-molybdopterin: lysine 59, serine 60, and arginine 84. Positions 85-175 (HWLVITEDGH…ADKPVRLVHY (91 aa)) are MOSC N-terminal region. Positions 179–323 (LKPQRPHEKE…LHVGEPVYKI (145 aa)) constitute an MOSC domain. Residues arginine 230, arginine 264, cysteine 265, and tyrosine 305 each coordinate Mo-molybdopterin.

The cofactor is Mo-molybdopterin.

The protein localises to the mitochondrion outer membrane. Its subcellular location is the membrane. The catalysed reaction is N(omega)-hydroxy-L-arginine + 2 Fe(II)-[cytochrome b5] + 2 H(+) = L-arginine + 2 Fe(III)-[cytochrome b5] + H2O. Its function is as follows. Catalyzes the reduction of N-oxygenated molecules, acting as a counterpart of cytochrome P450 and flavin-containing monooxygenases in metabolic cycles. As a component of prodrug-converting system, reduces a multitude of N-hydroxylated prodrugs particularly amidoximes, leading to increased drug bioavailability. May be involved in mitochondrial N(omega)-hydroxy-L-arginine (NOHA) reduction, regulating endogenous nitric oxide levels and biosynthesis. Postulated to cleave the N-OH bond of N-hydroxylated substrates in concert with electron transfer from NADH to cytochrome b5 reductase then to cytochrome b5, the ultimate electron donor that primes the active site for substrate reduction. In Danio rerio (Zebrafish), this protein is Mitochondrial amidoxime-reducing component 1 (mtarc1).